The sequence spans 61 residues: Sec-independent protein translocase protein TatA (61 aa).

Residues 1-21 (MFGIGMPELIVILVIVLVVFG) form a helical membrane-spanning segment.

This sequence belongs to the TatA/E family. The Tat system comprises two distinct complexes: a TatABC complex, containing multiple copies of TatA, TatB and TatC subunits, and a separate TatA complex, containing only TatA subunits. Substrates initially bind to the TatABC complex, which probably triggers association of the separate TatA complex to form the active translocon.

It is found in the cell inner membrane. Part of the twin-arginine translocation (Tat) system that transports large folded proteins containing a characteristic twin-arginine motif in their signal peptide across membranes. TatA could form the protein-conducting channel of the Tat system. The chain is Sec-independent protein translocase protein TatA from Geobacter metallireducens (strain ATCC 53774 / DSM 7210 / GS-15).